The primary structure comprises 331 residues: Ubiquinone biosynthesis protein UbiU (331 aa).

[4Fe-4S] cluster contacts are provided by C169, C176, C193, and C232.

This sequence belongs to the peptidase U32 family. UbiU subfamily. In terms of assembly, forms a heterodimer with UbiV. [4Fe-4S] cluster is required as a cofactor.

The protein operates within cofactor biosynthesis; ubiquinone biosynthesis. Required for O(2)-independent ubiquinone (coenzyme Q) biosynthesis. Together with UbiV, is essential for the C6-hydroxylation reaction in the oxygen-independent ubiquinone biosynthesis pathway. This chain is Ubiquinone biosynthesis protein UbiU, found in Escherichia coli (strain K12).